The chain runs to 199 residues: 5'-deoxynucleotidase YfbR (199 aa).

Substrate contacts are provided by residues 18–19 (RW) and H33. The HD domain occupies 30-142 (VSEHSLQVAM…VKQADALCAY (113 aa)). Residues H33, H68, and D69 each coordinate a divalent metal cation. Residues D69, 77–80 (DLPT), and D137 contribute to the substrate site. An a divalent metal cation-binding site is contributed by D137.

This sequence belongs to the 5DNU family. In terms of assembly, homodimer. A divalent metal cation serves as cofactor.

Its subcellular location is the cytoplasm. The enzyme catalyses a 2'-deoxyribonucleoside 5'-phosphate + H2O = a 2'-deoxyribonucleoside + phosphate. In terms of biological role, catalyzes the strictly specific dephosphorylation of 2'-deoxyribonucleoside 5'-monophosphates. In Salmonella arizonae (strain ATCC BAA-731 / CDC346-86 / RSK2980), this protein is 5'-deoxynucleotidase YfbR.